Here is a 226-residue protein sequence, read N- to C-terminus: MESFATSDKLFESREFVKGLEELKKRREDGEMTCDLLWRMCRFCHELSTTMSGEQRRKMLIEGRDYGLEAMDLDPSSFLAAKWTAIMFGLVVDQLPTKEKINDGGRLKDMLDKALELDPTDFALLHLRARFSYTIANLSWLERKAASMLYSEVPKATIDDALVDFKAAYNQNADWIENLLFLSKCHLAKKEKQQAREMLNKAIVLPAASSNDAQFVTECKSLLQKC.

Belongs to the FAM82/RMD family. Interacts with air-2.

It is found in the cytoplasm. Its subcellular location is the cytoskeleton. The protein localises to the spindle pole. Functionally, acts in chromosome segregation and organization during mitosis. This Caenorhabditis elegans protein is Regulator of microtubule dynamics protein 1 (rmd-1).